The primary structure comprises 902 residues: 4-hydroxyphenylacetate decarboxylase glycyl radical subunit (902 aa).

In terms of domain architecture, PFL spans K38–L774. S348 and C507 together coordinate 4-hydroxyphenylacetate. C507 serves as the catalytic Cysteine radical intermediate. E509 serves as the catalytic Proton donor. 4-hydroxyphenylacetate is bound by residues H540 and E641. Positions G782–V902 constitute a Glycine radical domain. G877 carries the post-translational modification Glycine radical.

It belongs to the glycyl radical enzyme (GRE) family. HPAD subfamily. Heterooctamer consisting of 4 large (HpdB) subunits and 4 small (HpdC) subunits, arranged as a tetramer of heterodimers. Also forms a catalytically inactive homodimer. Requires the activating protein CsdA to generate the key active site glycyl radical that is involved in catalysis. In terms of processing, phosphorylated on serine. Phosphorylation may trigger the formation of the active heterooctamers and thereby regulates enzyme activity.

It carries out the reaction 4-hydroxyphenylacetate + H(+) = 4-methylphenol + CO2. It catalyses the reaction 3,4-dihydroxyphenylacetate + H(+) = 4-methylcatechol + CO2. Its function is as follows. Glycyl radical subunit of the HPA decarboxylase that decarboxylates phenylacetates with a hydroxyl group in the p-position. Active toward 4-hydroxyphenylacetate and 3,4-dihydroxyphenylacetate, forming 4-methylphenol and 4-methylcatechol, respectively. Is likely involved in the catabolism of aromatic amino acids such as tyrosine fermentation. 4-methylphenol (p-cresol) formation provides metabolic toxicity, which allows an active suppression of other microbes and may provide growth advantages for the producers in highly competitive environments. The large subunit is the catalytic subunit that binds the substrate. This Clostridioides difficile (strain CD196) (Peptoclostridium difficile) protein is 4-hydroxyphenylacetate decarboxylase glycyl radical subunit.